Consider the following 207-residue polypeptide: Small ribosomal subunit protein uS4 (207 aa).

The tract at residues 31-55 (KCKLDSKPGQHGRTSGARTSDYGTQ) is disordered. Positions 42-53 (GRTSGARTSDYG) are enriched in polar residues. An S4 RNA-binding domain is found at 97–160 (SRLDNVVYRM…KKQARIIEAL (64 aa)).

The protein belongs to the universal ribosomal protein uS4 family. In terms of assembly, part of the 30S ribosomal subunit. Contacts protein S5. The interaction surface between S4 and S5 is involved in control of translational fidelity.

In terms of biological role, one of the primary rRNA binding proteins, it binds directly to 16S rRNA where it nucleates assembly of the body of the 30S subunit. With S5 and S12 plays an important role in translational accuracy. This chain is Small ribosomal subunit protein uS4, found in Burkholderia vietnamiensis (strain G4 / LMG 22486) (Burkholderia cepacia (strain R1808)).